A 205-amino-acid polypeptide reads, in one-letter code: 3-demethoxyubiquinol 3-hydroxylase (205 aa).

Residues glutamate 54, glutamate 84, histidine 87, glutamate 136, glutamate 168, and histidine 171 each coordinate Fe cation.

Belongs to the COQ7 family. Fe cation serves as cofactor.

The protein localises to the cell membrane. The catalysed reaction is a 5-methoxy-2-methyl-3-(all-trans-polyprenyl)benzene-1,4-diol + AH2 + O2 = a 3-demethylubiquinol + A + H2O. It participates in cofactor biosynthesis; ubiquinone biosynthesis. Its function is as follows. Catalyzes the hydroxylation of 2-nonaprenyl-3-methyl-6-methoxy-1,4-benzoquinol during ubiquinone biosynthesis. In Acidovorax sp. (strain JS42), this protein is 3-demethoxyubiquinol 3-hydroxylase.